Consider the following 407-residue polypeptide: Transmembrane protein 184B (407 aa).

Residues 1 to 28 are compositionally biased toward low complexity; that stretch reads MTVRGAALAPDPASPTTTTASPSVSATP. Positions 1 to 31 are disordered; that stretch reads MTVRGAALAPDPASPTTTTASPSVSATPEGS. 7 consecutive transmembrane segments (helical) span residues 40 to 60, 84 to 104, 121 to 141, 178 to 198, 214 to 234, 249 to 269, and 290 to 310; these read FLMT…ALLI, ILFI…FFTN, FVIY…SAIM, LQFC…QAFG, VTII…LFYF, FFMV…LAIL, and VAAG…ALAL. The disordered stretch occupies residues 369–395; that stretch reads TLEPGPTWRGGTHSLSRSHSLSGARDN. Residues Ser388, Ser402, and Ser403 each carry the phosphoserine modification.

Belongs to the TMEM184 family.

It localises to the membrane. May activate the MAP kinase signaling pathway. The sequence is that of Transmembrane protein 184B (Tmem184b) from Mus musculus (Mouse).